The chain runs to 257 residues: 3-dehydroquinate dehydratase (257 aa).

3-dehydroquinate contacts are provided by residues 50–52 (EWR) and Arg-86. His-147 serves as the catalytic Proton donor/acceptor. Lys-174 functions as the Schiff-base intermediate with substrate in the catalytic mechanism. Positions 216, 235, and 239 each coordinate 3-dehydroquinate.

It belongs to the type-I 3-dehydroquinase family. In terms of assembly, homodimer.

It carries out the reaction 3-dehydroquinate = 3-dehydroshikimate + H2O. Its pathway is metabolic intermediate biosynthesis; chorismate biosynthesis; chorismate from D-erythrose 4-phosphate and phosphoenolpyruvate: step 3/7. Its function is as follows. Involved in the third step of the chorismate pathway, which leads to the biosynthesis of aromatic amino acids. Catalyzes the cis-dehydration of 3-dehydroquinate (DHQ) and introduces the first double bond of the aromatic ring to yield 3-dehydroshikimate. The protein is 3-dehydroquinate dehydratase of Geobacillus kaustophilus (strain HTA426).